A 231-amino-acid chain; its full sequence is Probable amino-acid ABC transporter permease protein y4tG (231 aa).

The next 6 helical transmembrane spans lie at 9 to 29 (TGNG…MGLI), 32 to 52 (LQAA…FAVL), 64 to 84 (AAVL…FFLY), 86 to 106 (VLPE…ALGI), 161 to 181 (YLVS…VEML), and 196 to 216 (VPLS…SALV). Residues 28–217 (LITTLQAAFL…LTIVASALVR (190 aa)) enclose the ABC transmembrane type-1 domain.

This sequence belongs to the binding-protein-dependent transport system permease family. HisMQ subfamily.

It localises to the cell inner membrane. Probably part of the binding-protein-dependent transport system y4tEFGH for an amino acid. Probably responsible for the translocation of the substrate across the membrane. The protein is Probable amino-acid ABC transporter permease protein y4tG of Sinorhizobium fredii (strain NBRC 101917 / NGR234).